The chain runs to 190 residues: Probable chorismate pyruvate-lyase (190 aa).

Substrate-binding residues include Arg74, Leu112, and Glu173.

It belongs to the UbiC family.

The protein localises to the cytoplasm. It carries out the reaction chorismate = 4-hydroxybenzoate + pyruvate. The protein operates within cofactor biosynthesis; ubiquinone biosynthesis. Functionally, removes the pyruvyl group from chorismate, with concomitant aromatization of the ring, to provide 4-hydroxybenzoate (4HB) for the ubiquinone pathway. This chain is Probable chorismate pyruvate-lyase, found in Bordetella bronchiseptica (strain ATCC BAA-588 / NCTC 13252 / RB50) (Alcaligenes bronchisepticus).